Consider the following 86-residue polypeptide: Small ribosomal subunit protein uS17 (86 aa).

It belongs to the universal ribosomal protein uS17 family. In terms of assembly, part of the 30S ribosomal subunit.

Its function is as follows. One of the primary rRNA binding proteins, it binds specifically to the 5'-end of 16S ribosomal RNA. In Desulfitobacterium hafniense (strain DSM 10664 / DCB-2), this protein is Small ribosomal subunit protein uS17.